Reading from the N-terminus, the 405-residue chain is Argininosuccinate synthase (405 aa).

Residues 10–18 (AYSGGLDTS) and alanine 37 each bind ATP. Residues tyrosine 88 and serine 93 each contribute to the L-citrulline site. Glycine 118 is an ATP binding site. 3 residues coordinate L-aspartate: threonine 120, asparagine 124, and aspartate 125. Asparagine 124 is a binding site for L-citrulline. Arginine 128, serine 179, serine 188, glutamate 264, and tyrosine 276 together coordinate L-citrulline.

It belongs to the argininosuccinate synthase family. Type 1 subfamily. Homotetramer.

It is found in the cytoplasm. It catalyses the reaction L-citrulline + L-aspartate + ATP = 2-(N(omega)-L-arginino)succinate + AMP + diphosphate + H(+). It functions in the pathway amino-acid biosynthesis; L-arginine biosynthesis; L-arginine from L-ornithine and carbamoyl phosphate: step 2/3. The sequence is that of Argininosuccinate synthase from Pseudomonas putida (strain GB-1).